We begin with the raw amino-acid sequence, 127 residues long: Large ribosomal subunit protein bL12 (127 aa).

This sequence belongs to the bacterial ribosomal protein bL12 family. As to quaternary structure, homodimer. Part of the ribosomal stalk of the 50S ribosomal subunit. Forms a multimeric L10(L12)X complex, where L10 forms an elongated spine to which 2 to 4 L12 dimers bind in a sequential fashion. Binds GTP-bound translation factors.

Forms part of the ribosomal stalk which helps the ribosome interact with GTP-bound translation factors. Is thus essential for accurate translation. This is Large ribosomal subunit protein bL12 from Syntrophobacter fumaroxidans (strain DSM 10017 / MPOB).